The primary structure comprises 309 residues: MSQNVIRIATRKSPLALWQAEFVKAELEKFHPDLTVELLPMSTKGDIILDTPLAKVGGKGLFVKELEVAMLENRADIAVHSMKDVPVDFPEGLGLEIICEREDPRDAFVSNNYKSISELPKGAVVGTSSLRRQCQIRAARPDLQIRDLRGNVGTRLGKLDAGTYDAIILAAAGLKRLKLEERITSFISAEESLPANGQGAVGIECRTDDERVKALLAPLEHAETRFRVIAERAMNTHLEGGCQVPIGAYAEIVDDTLTLRGLVGNPDGTQIIASTKVGPKTDAKALGISLAEELLSKGAKTILDAVYIK.

Cysteine 242 bears the S-(dipyrrolylmethanemethyl)cysteine mark.

Belongs to the HMBS family. Monomer. It depends on dipyrromethane as a cofactor.

It catalyses the reaction 4 porphobilinogen + H2O = hydroxymethylbilane + 4 NH4(+). Its pathway is porphyrin-containing compound metabolism; protoporphyrin-IX biosynthesis; coproporphyrinogen-III from 5-aminolevulinate: step 2/4. Tetrapolymerization of the monopyrrole PBG into the hydroxymethylbilane pre-uroporphyrinogen in several discrete steps. This is Porphobilinogen deaminase from Shewanella woodyi (strain ATCC 51908 / MS32).